A 138-amino-acid polypeptide reads, in one-letter code: Large ribosomal subunit protein uL16 (138 aa).

Residues 1–16 are compositionally biased toward basic residues; the sequence is MLIPRRVKHRKQHHPG. Residues 1-25 form a disordered region; the sequence is MLIPRRVKHRKQHHPGRSGAATGGT.

This sequence belongs to the universal ribosomal protein uL16 family. As to quaternary structure, part of the 50S ribosomal subunit.

Functionally, binds 23S rRNA and is also seen to make contacts with the A and possibly P site tRNAs. The sequence is that of Large ribosomal subunit protein uL16 from Pseudarthrobacter chlorophenolicus (strain ATCC 700700 / DSM 12829 / CIP 107037 / JCM 12360 / KCTC 9906 / NCIMB 13794 / A6) (Arthrobacter chlorophenolicus).